Reading from the N-terminus, the 160-residue chain is Archaemetzincin (160 aa).

His-117 serves as a coordination point for Zn(2+). The Proton acceptor role is filled by Glu-118. Zn(2+) contacts are provided by His-121, His-127, Cys-128, Cys-132, Cys-151, and Cys-154.

This sequence belongs to the peptidase M54 family. Monomer. The cofactor is Zn(2+).

Functionally, probable zinc metalloprotease whose natural substrate is unknown. The protein is Archaemetzincin of Archaeoglobus fulgidus (strain ATCC 49558 / DSM 4304 / JCM 9628 / NBRC 100126 / VC-16).